The chain runs to 541 residues: Tegument protein UL21 homolog (541 aa).

This sequence belongs to the alphaherpesvirinae UL21 protein family. Interacts (via C-terminus) with UL16.

It localises to the virion tegument. The protein localises to the host cytoplasm. The protein resides in the host nucleus. May participate in DNA packaging/capsid maturation events. Promotes efficient incorporation of tegument proteins UL46, UL49, and US3 homologs into virions. May also play a role in capsid transport to the trans-Golgi network (TGN). The polypeptide is Tegument protein UL21 homolog (Homo sapiens (Human)).